The primary structure comprises 234 residues: Large ribosomal subunit protein bL25 (234 aa).

It belongs to the bacterial ribosomal protein bL25 family. CTC subfamily. Part of the 50S ribosomal subunit; part of the 5S rRNA/L5/L18/L25 subcomplex. Contacts the 5S rRNA. Binds to the 5S rRNA independently of L5 and L18.

Its function is as follows. This is one of the proteins that binds to the 5S RNA in the ribosome where it forms part of the central protuberance. In Rhodopseudomonas palustris (strain BisA53), this protein is Large ribosomal subunit protein bL25.